Here is a 441-residue protein sequence, read N- to C-terminus: Serine carboxypeptidase-like 3 (441 aa).

A signal peptide spans 1–30; sequence MASNYVFSVLRSLLLLIHTVFLGQHHVSSA. 3 cysteine pairs are disulfide-bonded: cysteine 88/cysteine 331, cysteine 252/cysteine 266, and cysteine 290/cysteine 297. An N-linked (GlcNAc...) asparagine glycan is attached at asparagine 109. The active site involves serine 184. A glycan (N-linked (GlcNAc...) asparagine) is linked at asparagine 350. The active site involves aspartate 366. A glycan (N-linked (GlcNAc...) asparagine) is linked at asparagine 382. Histidine 419 is an active-site residue.

Belongs to the peptidase S10 family. Expressed in roots.

The protein resides in the secreted. Functionally, probable carboxypeptidase. This chain is Serine carboxypeptidase-like 3 (SCPL3), found in Arabidopsis thaliana (Mouse-ear cress).